A 2515-amino-acid polypeptide reads, in one-letter code: Probable maltase-glucoamylase 2 (2515 aa).

The Cytoplasmic portion of the chain corresponds to 1–9 (MARKLSVLE). Residues 10–30 (VLLIIFCLIVVTIDILLLLLV) traverse the membrane as a helical segment. Residues 31 to 482 (LEETSDTSFT…DGVWIEMNEV (452 aa)) are Lumenal-facing. One can recognise a P-type 1 domain in the interval 41 to 88 (PECPEIPQSERIDCTPDQEVTEDICRWQYKCCWSPVADANVPRCFFPW). 3 disulfides stabilise this stretch: cysteine 43/cysteine 72, cysteine 54/cysteine 71, and cysteine 65/cysteine 84. The maltase stretch occupies residues 152–865 (SHENINLVDG…MDKQPANFIV (714 aa)). An N-linked (GlcNAc...) asparagine glycan is attached at asparagine 167. Tyrosine 371 carries the post-translational modification Sulfotyrosine. Asparagine 421 carries an N-linked (GlcNAc...) asparagine glycan. The Nucleophile role is filled by glutamate 478. Glutamate 481 is an active-site residue. Intrachain disulfides connect cysteine 608-cysteine 619, cysteine 916-cysteine 933, and cysteine 928-cysteine 946. An N-linked (GlcNAc...) asparagine glycan is attached at asparagine 613. The P-type 2 domain occupies 904–950 (WNLPVSDLEKFNCYPDDPTASEESCRQRGCLWEDTSTPGVPTCYYDT). Residues 1023–1766 (PLNTPPQPVG…GVNTYVTQVS (744 aa)) are glucoamylase. A Sulfotyrosine modification is found at tyrosine 1238. Aspartate 1375 serves as the catalytic Nucleophile. Residue glutamate 1378 is part of the active site. 3 disordered regions span residues 1816 to 1901 (TPTK…PITT), 1994 to 2015 (STTV…STNA), and 2037 to 2091 (TVPD…SSTT). Positions 1817-1831 (PTKTSTIPMSSHPSP) are enriched in polar residues. Residues 1832–1901 (STTNATSSET…STNATVPITT (70 aa)) show a composition bias toward low complexity. Residue asparagine 2249 is glycosylated (N-linked (GlcNAc...) asparagine).

It belongs to the glycosyl hydrolase 31 family.

It is found in the membrane. It carries out the reaction Hydrolysis of terminal (1-&gt;4)-linked alpha-D-glucose residues successively from non-reducing ends of the chains with release of beta-D-glucose.. This Homo sapiens (Human) protein is Probable maltase-glucoamylase 2.